A 309-amino-acid chain; its full sequence is MSSKANPPQPVATAPKRSQIPILDSTMSYVEAGASGPTVLFLHGNPTSSHIWRNIIPHVAPFGRCIAPDLIGYGQSGKPDIDYRFFDHVRYLDAFLDALDIRDVLLVAQDWGTALAFHLAARRPQRVLGLAFMEFIRPFERWEDFHQRPQAREMFKALRTPGVGEKLVLEDNVFVEKVLPASVLRAMSDDEMDVYRAPFPTPQSRKPVLRLPREMPIEGQPADVAAISAHDHRALRLSTYPKLLFAGDPGALIGPQAAREFAAGLKNCSFINLGPGAHYLQEDHADAIGRAIASWLPEVVLANQTDELA.

Residues 37-148 (PTVLFLHGNP…FERWEDFHQR (112 aa)) enclose the AB hydrolase-1 domain. Asp-110 serves as the catalytic Nucleophile. Catalysis depends on Glu-134, which acts as the Proton donor. The active-site Proton acceptor is His-278.

It belongs to the haloalkane dehalogenase family. Type 2 subfamily. As to quaternary structure, monomer.

The enzyme catalyses 1-haloalkane + H2O = a halide anion + a primary alcohol + H(+). Functionally, catalyzes hydrolytic cleavage of carbon-halogen bonds in halogenated aliphatic compounds, leading to the formation of the corresponding primary alcohols, halide ions and protons. The protein is Haloalkane dehalogenase of Mesorhizobium japonicum (strain LMG 29417 / CECT 9101 / MAFF 303099) (Mesorhizobium loti (strain MAFF 303099)).